The chain runs to 145 residues: Putative pre-16S rRNA nuclease (145 aa).

This sequence belongs to the YqgF nuclease family.

It is found in the cytoplasm. Its function is as follows. Could be a nuclease involved in processing of the 5'-end of pre-16S rRNA. The polypeptide is Putative pre-16S rRNA nuclease (Sulfurihydrogenibium sp. (strain YO3AOP1)).